The following is a 301-amino-acid chain: Acetyl-coenzyme A carboxylase carboxyl transferase subunit beta (301 aa).

The CoA carboxyltransferase N-terminal domain maps to 25-294 (LWIKDPSTGE…NSDAPEHEKT (270 aa)). Residues 282–301 (QPGNSDAPEHEKTEATDKAA) are disordered. Over residues 288–301 (APEHEKTEATDKAA) the composition is skewed to basic and acidic residues.

It belongs to the AccD/PCCB family. Acetyl-CoA carboxylase is a heterohexamer composed of biotin carboxyl carrier protein (AccB), biotin carboxylase (AccC) and two subunits each of ACCase subunit alpha (AccA) and ACCase subunit beta (AccD).

It is found in the cytoplasm. It carries out the reaction N(6)-carboxybiotinyl-L-lysyl-[protein] + acetyl-CoA = N(6)-biotinyl-L-lysyl-[protein] + malonyl-CoA. Its pathway is lipid metabolism; malonyl-CoA biosynthesis; malonyl-CoA from acetyl-CoA: step 1/1. Functionally, component of the acetyl coenzyme A carboxylase (ACC) complex. Biotin carboxylase (BC) catalyzes the carboxylation of biotin on its carrier protein (BCCP) and then the CO(2) group is transferred by the transcarboxylase to acetyl-CoA to form malonyl-CoA. This is Acetyl-coenzyme A carboxylase carboxyl transferase subunit beta from Brucella anthropi (strain ATCC 49188 / DSM 6882 / CCUG 24695 / JCM 21032 / LMG 3331 / NBRC 15819 / NCTC 12168 / Alc 37) (Ochrobactrum anthropi).